A 136-amino-acid polypeptide reads, in one-letter code: MLKVDIVTPKGIVYTEEVESVNIPAYDGEMGILENHMLLLTQIKPGLVYFNKDDKNGIAVGYGFADITPDKVIILTEEAVPVGNIDLEEYKKVFEEATRKLSDARTAEEISEWQKKREMAETFINIAKHFSPKIKA.

It belongs to the ATPase epsilon chain family. In terms of assembly, F-type ATPases have 2 components, CF(1) - the catalytic core - and CF(0) - the membrane proton channel. CF(1) has five subunits: alpha(3), beta(3), gamma(1), delta(1), epsilon(1). CF(0) has three main subunits: a, b and c.

It localises to the cell inner membrane. Functionally, produces ATP from ADP in the presence of a proton gradient across the membrane. The chain is ATP synthase epsilon chain from Hydrogenobaculum sp. (strain Y04AAS1).